Here is a 426-residue protein sequence, read N- to C-terminus: Glutamate-1-semialdehyde 2,1-aminomutase (426 aa).

Lys-265 is subject to N6-(pyridoxal phosphate)lysine.

The protein belongs to the class-III pyridoxal-phosphate-dependent aminotransferase family. HemL subfamily. As to quaternary structure, homodimer. Requires pyridoxal 5'-phosphate as cofactor.

The protein localises to the cytoplasm. It carries out the reaction (S)-4-amino-5-oxopentanoate = 5-aminolevulinate. The protein operates within porphyrin-containing compound metabolism; protoporphyrin-IX biosynthesis; 5-aminolevulinate from L-glutamyl-tRNA(Glu): step 2/2. In Salmonella agona (strain SL483), this protein is Glutamate-1-semialdehyde 2,1-aminomutase.